A 759-amino-acid chain; its full sequence is Protein MTSS 1 (759 aa).

The 254-residue stretch at 1–254 (MEAVIEKECS…EQVILDLKGS (254 aa)) folds into the IMD domain. Residues 108 to 157 (LQEQMEEWKKVANQLDKDHAKEYKKARQEIKNKSSDTLKLQKKAKKVDAQ) are a coiled coil. Residues 259 to 309 (SYQTPPSSPSTTMSRKSSVCSSLNSVNSSDSRSSGSHSHSPSSHYRYRSSN) are disordered. Phosphothreonine is present on threonine 262. Phosphoserine occurs at positions 265, 266, 275, and 326. The interval 331 to 354 (QDAFQSKSPSPMPPEAANQLSNGF) is disordered. The residue at position 429 (threonine 429) is a Phosphothreonine. Disordered stretches follow at residues 431-472 (QRRK…AATR) and 569-759 (KRPA…PRFS). Threonine 607 is subject to Phosphothreonine. Residues 612–627 (PIPIKTPVIPVKTPTV) show a composition bias toward low complexity. Serine 648 and serine 651 each carry phosphoserine. Residues 660 to 670 (GVSNIPSSLWS) are compositionally biased toward polar residues. The segment covering 675 to 685 (VNPPLPGPKPS) has biased composition (pro residues). The 18-residue stretch at 731–748 (QGEDMLNAIRRGVKLKKT) folds into the WH2 domain.

Belongs to the MTSS family. As to quaternary structure, binds to actin. In terms of tissue distribution, strongly expressed in the developing neurons and skeletal and cardiac muscles in embryos. Strongly expressed also in liver, outer layers of the kidney, and in the Purkinje cells of the brain.

The protein resides in the cytoplasm. Its subcellular location is the cytoskeleton. In terms of biological role, inhibits the nucleation of actin filaments in vitro. The chain is Protein MTSS 1 from Mus musculus (Mouse).